The sequence spans 429 residues: Histidinol dehydrogenase (429 aa).

Residues Tyr127, Gln188, and Asn211 each coordinate NAD(+). Positions 234, 256, and 259 each coordinate substrate. Positions 256 and 259 each coordinate Zn(2+). Active-site proton acceptor residues include Glu324 and His325. Substrate-binding residues include His325, Asp358, Glu412, and His417. Asp358 contacts Zn(2+). His417 provides a ligand contact to Zn(2+).

The protein belongs to the histidinol dehydrogenase family. Zn(2+) is required as a cofactor.

It catalyses the reaction L-histidinol + 2 NAD(+) + H2O = L-histidine + 2 NADH + 3 H(+). The protein operates within amino-acid biosynthesis; L-histidine biosynthesis; L-histidine from 5-phospho-alpha-D-ribose 1-diphosphate: step 9/9. Functionally, catalyzes the sequential NAD-dependent oxidations of L-histidinol to L-histidinaldehyde and then to L-histidine. The protein is Histidinol dehydrogenase of Bacillus cereus (strain ATCC 10987 / NRS 248).